A 237-amino-acid chain; its full sequence is Glutathione-independent glyoxalase HSP31 (237 aa).

Residues C138, H139, and E170 contribute to the active site. C138 is subject to Cysteine sulfinic acid (-SO2H).

Belongs to the peptidase C56 family. HSP31-like subfamily. In terms of assembly, homodimer. Cys-138 is easily oxidized to sulfinic acid.

Its subcellular location is the cytoplasm. The protein localises to the P-body. The catalysed reaction is methylglyoxal + H2O = (R)-lactate + H(+). Functionally, catalyzes the conversion of methylglyoxal (MG) to D-lactate in a single glutathione (GSH)-independent step. May play a role in detoxifying endogenously produced glyoxals. Involved in protection against reactive oxygen species (ROS). Important for viability in stationary phase. May negatively regulate TORC1 in response to nutrient limitation. This Saccharomyces cerevisiae (strain ATCC 204508 / S288c) (Baker's yeast) protein is Glutathione-independent glyoxalase HSP31.